A 485-amino-acid polypeptide reads, in one-letter code: Protein adenylyltransferase Fic (485 aa).

Residues 21-43 form a helical membrane-spanning segment; the sequence is YRFVLFFIAGSLAAFAFHALTSS. TPR repeat units follow at residues 107-140 and 141-175; these read AMGALRLAQEMYMAGKDDKAARLFEHALALAPKH and PEVLLRYGEFLEHNQRNIVLADQYYFQALCISPSN. The Inhibitory (S/T)XXXE(G/N) motif motif lies at 232–237; it reads SVGIEG. Residues Glu236 and 317-320 each bind ATP; that span reads VGGH. A Fido domain is found at 286–421; the sequence is ITLKDILELH…IRPFVRFIAD (136 aa). The active site involves His364. ATP-binding positions include 368 to 375, 400 to 401, and Asn408; these read DGNGRTSR and YY.

This sequence belongs to the fic family. As to quaternary structure, homodimer.

Its subcellular location is the membrane. It carries out the reaction L-tyrosyl-[protein] + ATP = O-(5'-adenylyl)-L-tyrosyl-[protein] + diphosphate. The enzyme catalyses L-threonyl-[protein] + ATP = 3-O-(5'-adenylyl)-L-threonyl-[protein] + diphosphate. The catalysed reaction is 3-O-(5'-adenylyl)-L-threonyl-[protein] + H2O = L-threonyl-[protein] + AMP + H(+). The side chain of Glu-236 determines which of the two opposing activities (AMPylase or de-AMPylase) will take place. In response to endoplasmic reticulum stress, mediates de-AMPylase activity. Adenylyltransferase activity is inhibited by the inhibitory helix present at the N-terminus: Glu-236 binds ATP and competes with ATP-binding at Arg-375, thereby preventing adenylyltransferase activity. In unstressed cells, disengagement of Glu-236 promotes adenylyltransferase activity. Activation dissociates ATP-binding from Glu-236, allowing ordered binding of the entire ATP moiety with the alpha-phosphate in an orientation that is productive for accepting an incoming target hydroxyl side chain. Protein that can both mediate the addition of adenosine 5'-monophosphate (AMP) to specific residues of target proteins (AMPylation), and the removal of the same modification from target proteins (de-AMPylation), depending on the context. The side chain of Glu-236 determines which of the two opposing activities (AMPylase or de-AMPylase) will take place. Acts as a key regulator of the unfolded protein response (UPR) by mediating AMPylation or de-AMPylation of Hsc70-3/BiP. In unstressed cells, acts as an adenylyltransferase by mediating AMPylation of Hsc70-3/BiP at 'Thr-518', thereby inactivating it. In response to endoplasmic reticulum stress, acts as a phosphodiesterase by mediating removal of ATP (de-AMPylation) from Hsc70-3/BiP at 'Thr-518', leading to restore HSPA5/BiP activity. In Drosophila virilis (Fruit fly), this protein is Protein adenylyltransferase Fic.